A 461-amino-acid polypeptide reads, in one-letter code: Glycogen synthase (461 aa).

Residue K15 participates in ADP-alpha-D-glucose binding.

Belongs to the glycosyltransferase 1 family. Bacterial/plant glycogen synthase subfamily.

It catalyses the reaction [(1-&gt;4)-alpha-D-glucosyl](n) + ADP-alpha-D-glucose = [(1-&gt;4)-alpha-D-glucosyl](n+1) + ADP + H(+). The protein operates within glycan biosynthesis; glycogen biosynthesis. In terms of biological role, synthesizes alpha-1,4-glucan chains using ADP-glucose. The chain is Glycogen synthase from Fusobacterium nucleatum subsp. nucleatum (strain ATCC 25586 / DSM 15643 / BCRC 10681 / CIP 101130 / JCM 8532 / KCTC 2640 / LMG 13131 / VPI 4355).